Consider the following 475-residue polypeptide: Endoglucanase A (475 aa).

Residues 1 to 26 (MKKTTAFLLCFLMIFTALLPMQNANA) form the signal peptide. His-147 is a catalytic residue. Glu-195 functions as the Proton donor in the catalytic mechanism. Glu-332 serves as the catalytic Nucleophile. One can recognise a Dockerin domain in the interval 409–474 (PVIVYGDYNN…LLGMVSKLPS (66 aa)).

Belongs to the glycosyl hydrolase 5 (cellulase A) family.

The catalysed reaction is Endohydrolysis of (1-&gt;4)-beta-D-glucosidic linkages in cellulose, lichenin and cereal beta-D-glucans.. The biological conversion of cellulose to glucose generally requires three types of hydrolytic enzymes: (1) Endoglucanases which cut internal beta-1,4-glucosidic bonds; (2) Exocellobiohydrolases that cut the disaccharide cellobiose from the non-reducing end of the cellulose polymer chain; (3) Beta-1,4-glucosidases which hydrolyze the cellobiose and other short cello-oligosaccharides to glucose. This Ruminiclostridium cellulolyticum (strain ATCC 35319 / DSM 5812 / JCM 6584 / H10) (Clostridium cellulolyticum) protein is Endoglucanase A (celCCA).